The primary structure comprises 238 residues: Dolichyldiphosphatase 1 (238 aa).

4 helical membrane-spanning segments follow: residues L33–F53, P100–L120, F130–V150, and W162–F182.

It belongs to the dolichyldiphosphatase family.

It is found in the endoplasmic reticulum membrane. The catalysed reaction is a di-trans,poly-cis-dolichyl diphosphate + H2O = a di-trans,poly-cis-dolichyl phosphate + phosphate + H(+). It participates in protein modification; protein glycosylation. In terms of biological role, required for efficient N-glycosylation. Necessary for maintaining optimal levels of dolichol-linked oligosaccharides. Hydrolyzes dolichyl pyrophosphate at a very high rate and dolichyl monophosphate at a much lower rate. Does not act on phosphatidate. The protein is Dolichyldiphosphatase 1 (DOLPP1) of Homo sapiens (Human).